The following is a 122-amino-acid chain: UPF0344 protein BcerKBAB4_1054 (122 aa).

The next 4 membrane-spanning stretches (helical) occupy residues 6–26 (ITAWALGLILFFVAYSLYSAG), 38–58 (LMYIIIIVTGFMLYMSIVKTA), 65–85 (WYGMKMLAGILVIAGMEMVLV), and 92–112 (PTGAVWGLFIVALVAVLYLGL).

It belongs to the UPF0344 family.

The protein localises to the cell membrane. The sequence is that of UPF0344 protein BcerKBAB4_1054 from Bacillus mycoides (strain KBAB4) (Bacillus weihenstephanensis).